The chain runs to 253 residues: uncharacterized protein (253 aa).

The region spanning 4-73 (FGKSTADRVK…IDVSGVTVLQ (70 aa)) is the BON 1 domain. Positions 79-93 (AAQTAPTTPAQTSPS) are enriched in low complexity. A disordered region spans residues 79–105 (AAQTAPTTPAQTSPSVQDSPSTPVQMP). Positions 119-188 (DTSRIAKAVL…VDISGLRVAQ (70 aa)) constitute a BON 2 domain. The LysM domain occupies 204–251 (TVYTVKPGDSLSKIAEHYYGDQMEYKKIAHYNNISNPDLIQPGQKLRI).

This is an uncharacterized protein from Deinococcus radiodurans (strain ATCC 13939 / DSM 20539 / JCM 16871 / CCUG 27074 / LMG 4051 / NBRC 15346 / NCIMB 9279 / VKM B-1422 / R1).